Consider the following 293-residue polypeptide: Formamidopyrimidine-DNA glycosylase (293 aa).

Residue Pro2 is the Schiff-base intermediate with DNA of the active site. The active-site Proton donor is the Glu3. Lys58 functions as the Proton donor; for beta-elimination activity in the catalytic mechanism. Positions 104, 123, and 166 each coordinate DNA. The FPG-type zinc-finger motif lies at Gln257–Thr293. Residue Arg283 is the Proton donor; for delta-elimination activity of the active site.

It belongs to the FPG family. As to quaternary structure, monomer. It depends on Zn(2+) as a cofactor.

It carries out the reaction Hydrolysis of DNA containing ring-opened 7-methylguanine residues, releasing 2,6-diamino-4-hydroxy-5-(N-methyl)formamidopyrimidine.. The enzyme catalyses 2'-deoxyribonucleotide-(2'-deoxyribose 5'-phosphate)-2'-deoxyribonucleotide-DNA = a 3'-end 2'-deoxyribonucleotide-(2,3-dehydro-2,3-deoxyribose 5'-phosphate)-DNA + a 5'-end 5'-phospho-2'-deoxyribonucleoside-DNA + H(+). In terms of biological role, involved in base excision repair of DNA damaged by oxidation or by mutagenic agents. Acts as a DNA glycosylase that recognizes and removes damaged bases. Has a preference for oxidized purines, such as 7,8-dihydro-8-oxoguanine (8-oxoG). Has AP (apurinic/apyrimidinic) lyase activity and introduces nicks in the DNA strand. Cleaves the DNA backbone by beta-delta elimination to generate a single-strand break at the site of the removed base with both 3'- and 5'-phosphates. This chain is Formamidopyrimidine-DNA glycosylase, found in Nitrobacter winogradskyi (strain ATCC 25391 / DSM 10237 / CIP 104748 / NCIMB 11846 / Nb-255).